The primary structure comprises 805 residues: Leucine--tRNA ligase (805 aa).

The short motif at 40–51 (PYPSGQGLHVGH) is the 'HIGH' region element. Residues 576 to 580 (KMSKS) carry the 'KMSKS' region motif. ATP is bound at residue lysine 579.

The protein belongs to the class-I aminoacyl-tRNA synthetase family.

It localises to the cytoplasm. The enzyme catalyses tRNA(Leu) + L-leucine + ATP = L-leucyl-tRNA(Leu) + AMP + diphosphate. This chain is Leucine--tRNA ligase, found in Ligilactobacillus salivarius (strain UCC118) (Lactobacillus salivarius).